Here is a 738-residue protein sequence, read N- to C-terminus: uncharacterized protein (738 aa).

Composition is skewed to polar residues over residues 1 to 34 (MSSSSKDSSFQVETPVQNILETSTNSELQDQVSS), 140 to 169 (TSSDFQSKDSLSTTQPSVSGGNGSTSQSPP), and 177 to 197 (KPFSISNEPVEQETENSSTKD). 2 disordered regions span residues 1–51 (MSSS…AASI) and 140–197 (TSSD…STKD). An RRM domain is found at 363 to 434 (SRLFLGHLNT…QKLHLEISKI (72 aa)). A disordered region spans residues 466–487 (YPTSSRKRTRSPLMSKGKSYDR).

This is an uncharacterized protein from Schizosaccharomyces pombe (strain 972 / ATCC 24843) (Fission yeast).